Here is a 713-residue protein sequence, read N- to C-terminus: Mitochondrial intermediate peptidase (713 aa).

The transit peptide at 1–35 (MLCVGRLGGLGARAAALPPRRAGRGILEAGIRARR) directs the protein to the mitochondrion. Lysine 126 bears the N6-acetyllysine mark. Histidine 495 is a binding site for Zn(2+). Glutamate 496 is an active-site residue. Positions 499 and 502 each coordinate Zn(2+).

Belongs to the peptidase M3 family. As to quaternary structure, monomer. It depends on Zn(2+) as a cofactor.

It localises to the mitochondrion matrix. The catalysed reaction is Release of an N-terminal octapeptide as second stage of processing of some proteins imported into the mitochondrion.. Activity is divalent cation-dependent. It is stimulated by manganese, magnesium or calcium ions and reversibly inhibited by zinc, cobalt and iron. In terms of biological role, cleaves proteins, imported into the mitochondrion, to their mature size. This is Mitochondrial intermediate peptidase (MIPEP) from Pongo abelii (Sumatran orangutan).